Reading from the N-terminus, the 368-residue chain is MTLQQKELFQKSPLLLENGETLSPVLVGYETYGTLSASRDNCILLEHALTGTAHAAKHFEDDAPGWWDDYIGPGKTIDTDKYFLVCTNVFGGCSGTTGPSSINPKTGEPFRLQFPGFSIKDIIKVQRELLEQLGVTRIVSVIGGSMGGMQATEWAIDYADITDSIINIASPLAAGPDAIGYNLIMRMAILNDPDFNGGNYVGQPEGGLATARMVGMMTYRTSELFSKRFERFTVAESSPAAFSKEHFQIESYLQYQGDTFVERFDANSYLYLTKAIDLFDVTAPAKDDLPAFSKIKIPYLLIGITTDQLFRIHDLRRGYELLKEWDVPVTYHEVASEYGHDAFLVEKEVPKFEPLIRSFLSNLPVKSI.

In terms of domain architecture, AB hydrolase-1 spans 43–346 (ILLEHALTGT…EYGHDAFLVE (304 aa)). Serine 145 acts as the Nucleophile in catalysis. Position 212 (arginine 212) interacts with substrate. Residues aspartate 307 and histidine 340 contribute to the active site. Residue aspartate 341 participates in substrate binding.

This sequence belongs to the AB hydrolase superfamily. MetX family. As to quaternary structure, homodimer.

The protein localises to the cytoplasm. The enzyme catalyses L-homoserine + acetyl-CoA = O-acetyl-L-homoserine + CoA. It participates in amino-acid biosynthesis; L-methionine biosynthesis via de novo pathway; O-acetyl-L-homoserine from L-homoserine: step 1/1. Its function is as follows. Transfers an acetyl group from acetyl-CoA to L-homoserine, forming acetyl-L-homoserine. The protein is Homoserine O-acetyltransferase of Listeria monocytogenes serovar 1/2a (strain ATCC BAA-679 / EGD-e).